Reading from the N-terminus, the 503-residue chain is MSQKQLKEAFVRNLSGTSVLEVTQGLCFPAFCILCRGLWIIFSQHVCSFSNTWSTRFLMDFVVLIVPLVITLTVLSSFILLENLTVIVWGAWLLYQIYHRRTCYAKVPVQKVFANFLKISLESEYNPAITCYRVINSVFTAIAILAVDFPLFPRRFAKTELYGTGAMDFGVGGFIFGAAMVCPEVRRKSIEESRFNYLRKSLYSVWPLVFLGMGRLVIIKSIGYQEHSTEYGIHWNFFFTIIVVRLVTSLLLIIFPLNKSWIVAVSITVVYQLALDYTPLKRILLYGTDGSGTRVGFLNANREGIISTLGYVTIHMAGVQTGLYVLKGRAQVRDWIKATCWVFSVAVGFFISLHIVQVNIEAVSRRMANLAFCLWVVASSLMLLSCLLLSGIILSFAQFLIKGSLVPCSWKLIQSPTTHKNHSESLILEAEKNQPSLCLITALNRNQLFFFLLSNITTGLINLTMDTLHTGALWTLVVLSIYMFTNCLVIYVLDLQGKTIKFW.

Topologically, residues methionine 1–glutamate 21 are lumenal. The N-linked (GlcNAc...) asparagine glycan is linked to asparagine 13. The chain crosses the membrane as a helical span at residues valine 22–phenylalanine 42. Residues serine 43–serine 48 lie on the Cytoplasmic side of the membrane. The helical transmembrane segment at phenylalanine 49–threonine 71 threads the bilayer. Topologically, residues leucine 72–valine 74 are lumenal. The chain crosses the membrane as a helical span at residues leucine 75 to isoleucine 97. The Cytoplasmic segment spans residues tyrosine 98–cysteine 131. A helical membrane pass occupies residues tyrosine 132–phenylalanine 152. The Lumenal segment spans residues proline 153–glutamate 160. A helical membrane pass occupies residues leucine 161 to valine 181. Over cysteine 182–serine 201 the chain is Cytoplasmic. The chain crosses the membrane as a helical span at residues leucine 202–isoleucine 222. The Lumenal portion of the chain corresponds to glycine 223–asparagine 236. The helical transmembrane segment at phenylalanine 237–leucine 257 threads the bilayer. The Cytoplasmic segment spans residues asparagine 258–lysine 259. The helical transmembrane segment at serine 260 to leucine 280 threads the bilayer. At lysine 281–glycine 304 the chain is on the lumenal side. Residues isoleucine 305 to valine 325 traverse the membrane as a helical segment. Over leucine 326–threonine 339 the chain is Cytoplasmic. The helical transmembrane segment at cysteine 340–isoleucine 360 threads the bilayer. Over glutamate 361–serine 380 the chain is Lumenal. A helical membrane pass occupies residues leucine 381 to isoleucine 401. Residues lysine 402–glutamine 447 lie on the Cytoplasmic side of the membrane. At serine 415 the chain carries Phosphoserine. A helical transmembrane segment spans residues leucine 448 to leucine 468. Topologically, residues histidine 469–alanine 472 are lumenal. A helical transmembrane segment spans residues leucine 473–leucine 493. The Cytoplasmic portion of the chain corresponds to aspartate 494–tryptophan 503.

The protein belongs to the PIGW family.

Its subcellular location is the endoplasmic reticulum membrane. It participates in glycolipid biosynthesis; glycosylphosphatidylinositol-anchor biosynthesis. Functionally, acyltransferase that catalyzes the acyl transfer from an acyl-CoA at the 2-OH position of the inositol ring of glucosaminyl phosphatidylinositol (GlcN-PI) to generate GlcN-(acyl)PI and participates in the fourth step of GPI-anchor biosynthesi. Required for the transport of GPI-anchored proteins to the plasma membrane. Acetylation during GPI-anchor biosynthesis is not essential for the subsequent mannosylation and is usually removed soon after the attachment of GPIs to proteins. This Mus musculus (Mouse) protein is Glucosaminyl-phosphatidylinositol-acyltransferase PIGW.